The sequence spans 128 residues: Mini-ribonuclease 3 (128 aa).

Asp-17 is a catalytic residue.

It belongs to the MrnC RNase family. Homodimer. Mg(2+) serves as cofactor.

It is found in the cytoplasm. Its function is as follows. Involved in correct processing of both the 5' and 3' ends of 23S rRNA precursor. Processes 30S rRNA precursor transcript even in absence of ribonuclease 3 (Rnc); Rnc processes 30S rRNA into smaller rRNA precursors. This chain is Mini-ribonuclease 3, found in Streptococcus pneumoniae (strain ATCC BAA-255 / R6).